The following is a 90-amino-acid chain: Small ribosomal subunit protein uS15 (90 aa).

It belongs to the universal ribosomal protein uS15 family. As to quaternary structure, part of the 30S ribosomal subunit. Forms a bridge to the 50S subunit in the 70S ribosome, contacting the 23S rRNA.

Functionally, one of the primary rRNA binding proteins, it binds directly to 16S rRNA where it helps nucleate assembly of the platform of the 30S subunit by binding and bridging several RNA helices of the 16S rRNA. Its function is as follows. Forms an intersubunit bridge (bridge B4) with the 23S rRNA of the 50S subunit in the ribosome. The protein is Small ribosomal subunit protein uS15 of Campylobacter hominis (strain ATCC BAA-381 / DSM 21671 / CCUG 45161 / LMG 19568 / NCTC 13146 / CH001A).